A 300-amino-acid chain; its full sequence is NAD kinase (300 aa).

The Proton acceptor role is filled by Asp75. NAD(+)-binding positions include 75–76, 149–150, Arg177, Asp179, 190–195, Ala214, and Gln248; these read DG, ND, and TAYALS.

The protein belongs to the NAD kinase family. Requires a divalent metal cation as cofactor.

It is found in the cytoplasm. The catalysed reaction is NAD(+) + ATP = ADP + NADP(+) + H(+). Its function is as follows. Involved in the regulation of the intracellular balance of NAD and NADP, and is a key enzyme in the biosynthesis of NADP. Catalyzes specifically the phosphorylation on 2'-hydroxyl of the adenosine moiety of NAD to yield NADP. The chain is NAD kinase from Burkholderia cenocepacia (strain ATCC BAA-245 / DSM 16553 / LMG 16656 / NCTC 13227 / J2315 / CF5610) (Burkholderia cepacia (strain J2315)).